A 715-amino-acid polypeptide reads, in one-letter code: Solute carrier organic anion transporter family member 1C1 (715 aa).

The Cytoplasmic portion of the chain corresponds to 1-43 (MDTSSKENAHLFHKNSAQPAGGPSFTVGYPSTEEARPCCGKLK). The chain crosses the membrane as a helical span at residues 44–63 (VFLGALSFVYFAKALAEGYL). Residues 64 to 82 (KSTVTQIERRFEIPSSLVG) are Extracellular-facing. The helical transmembrane segment at 83 to 103 (IIDGSFEIGNLLVITFVSYFG) threads the bilayer. The Cytoplasmic portion of the chain corresponds to 104–109 (AKLHRP). The chain crosses the membrane as a helical span at residues 110–134 (KIIGAGCLVMGFGTMLIAVPQFFME). Over 135–187 (KYSYEKYERYSPSSNVTPSISPCYLESSSPSPSSILGKSQNKISHECVGDSSS) the chain is Extracellular. A helical transmembrane segment spans residues 188-216 (SMWVYVFLGNLLRGLGETPIQPLGIAYLD). Residues 217 to 235 (DFASEDNAAFYIGCVQTVA) lie on the Cytoplasmic side of the membrane. A helical transmembrane segment spans residues 236–256 (IIGPIFGFLLGSLCAKLYVDI). The Extracellular portion of the chain corresponds to 257-274 (GFVNLDHITITPKDPQWV). The helical transmembrane segment at 275-299 (GAWWLGYLIAGFLSLLAAVPFWCLP) threads the bilayer. Residues 300 to 351 (KTLPRSQSRENSGSTSEKSKFIDDPIHYQMAPGDDKMKIMEMAKDFLPSLKT) are Cytoplasmic-facing. The helical transmembrane segment at 352–373 (LFRNPVYILYLCASTVQFNSLF) threads the bilayer. The Extracellular portion of the chain corresponds to 374 to 393 (GMVTYKPKYIEQQYGQSSSK). A helical membrane pass occupies residues 394–417 (ANFVIGLINIPAVALGIFSGGIVM). Over 418–421 (KKFR) the chain is Cytoplasmic. The helical transmembrane segment at 422-445 (LGICEATKLYLGSSVFGYLLFLSL) threads the bilayer. Residues 446-557 (FALGCENSSV…NGCSQMFLYF (112 aa)) are Extracellular-facing. N-linked (GlcNAc...) asparagine glycosylation is present at N452. The Kazal-like domain occupies 473 to 528 (RALFSDCNSRCKCSDSKWEPMCGDNGITYVSACLAGCQSSSRSGKNIIFSNCTCVG). 3 cysteine pairs are disulfide-bonded: C479–C509, C485–C505, and C494–C526. N-linked (GlcNAc...) asparagine glycans are attached at residues N523 and N536. A helical membrane pass occupies residues 558–580 (LVISVITSYTLSLGGIPGYILLL). Topologically, residues 581–589 (RCIQPQLKS) are cytoplasmic. The helical transmembrane segment at 590-615 (FALGIYTLAVRVLAGIPAPVYFGVLI) threads the bilayer. Residues 616-649 (DTSCLKWGFKKCGSRGSCRLYDSHAFRHIYLGLT) lie on the Extracellular side of the membrane. Residues 650 to 667 (TLLGTVSVFLSMAVLFVL) form a helical membrane-spanning segment. Topologically, residues 668-715 (KKKYVSKHSSLITTREKIGMSSSIKKETCAARDRGLQPKYWPGKETRL) are cytoplasmic.

The protein belongs to the organo anion transporter (TC 2.A.60) family. In terms of tissue distribution, widely expressed throughout the brain except in the cerebellum. Not detected in kidney, heart, lung, skeletal muscle, spleen, liver, nor testis. Highly expressed in cerebral microvessels throughout the brain and in the choroid plexus (at mRNA and protein level).

The protein localises to the cell membrane. The catalysed reaction is 3,3',5'-triiodo-L-thyronine(out) = 3,3',5'-triiodo-L-thyronine(in). The enzyme catalyses L-thyroxine(out) = L-thyroxine(in). It catalyses the reaction L-thyroxine sulfate(out) = L-thyroxine sulfate(in). It carries out the reaction 17beta-estradiol 17-O-(beta-D-glucuronate)(out) = 17beta-estradiol 17-O-(beta-D-glucuronate)(in). The catalysed reaction is 3,3',5-triiodo-L-thyronine(out) = 3,3',5-triiodo-L-thyronine(in). Mediates the Na(+)-independent high affinity transport of thyroid hormones at the plasma membrane of brain capillary endothelial cells. The transport activity of substrates L-thyroxine (T4) and 3,3',5'-triiodo-L-thyronine (reverse T3, rT3) is much greater than that of 3,3',5-triiodo-L-thyronine (T3). The prehormone, T4, is the major form in the circulating blood and is converted to the active form, T3, by the iodothyronine-deiodinase in peripheral organs. T3 plays an essential role in brain development via binding to specific nuclear receptors (thyroid hormone receptor). Also transports organic anions such as the conjugated steroid 17-beta-glucuronosyl estradiol (17beta-estradiol 17-O-(beta-D-glucuronate)). Transports T4 and estrone-3-sulfate in a pH-insensitive manner. May serve as a drug efflux system at the blood brain barrier. The protein is Solute carrier organic anion transporter family member 1C1 (Slco1c1) of Mus musculus (Mouse).